A 653-amino-acid polypeptide reads, in one-letter code: PAN2-PAN3 deadenylation complex subunit PAN3 (653 aa).

Disordered stretches follow at residues 1 to 21 (MASD…ENAK) and 45 to 128 (HDPN…AAPD). A C3H1-type zinc finger spans residues 19–48 (NAKDTLCRNVTIYGRCRYEDKGCVYNHDPN). The segment covering 68–95 (SFTPSLLSSNGSSPTSSSATLKKTTTIS) has biased composition (low complexity). The span at 108-119 (GISSRSNASTPS) shows a compositional bias: polar residues. The interval 256-516 (QTLPNTQLPA…TIDIFITGIS (261 aa)) is pseudokinase domain. ATP contacts are provided by residues Arg308, 357–364 (DYHPLSKT), and 416–417 (SK). Positions 517 to 555 (SQLMSTFDSALHMDDQLTSDLSRELENGRLVRLMTKLNF) form a coiled coil. Residues 556 to 653 (INERPEYEHD…ALLKPTRRVH (98 aa)) form a knob domain region.

Belongs to the protein kinase superfamily. PAN3 family. Homodimer. Forms a heterotrimer with a catalytic subunit pan2 to form the poly(A)-nuclease (PAN) deadenylation complex. Interacts (via PAM-2 motif) with poly(A)-binding protein pab1 (via PABC domain), conferring substrate specificity of the enzyme complex.

It is found in the cytoplasm. Regulatory subunit of the poly(A)-nuclease (PAN) deadenylation complex, one of two cytoplasmic mRNA deadenylases involved in mRNA turnover. PAN specifically shortens poly(A) tails of RNA and the activity is stimulated by poly(A)-binding protein pab1. PAN deadenylation is followed by rapid degradation of the shortened mRNA tails by the CCR4-NOT complex. Deadenylated mRNAs are then degraded by two alternative mechanisms, namely exosome-mediated 3'-5' exonucleolytic degradation, or deadenylation-dependent mRNA decaping and subsequent 5'-3' exonucleolytic degradation by xrn1. May also be involved in post-transcriptional maturation of mRNA poly(A) tails. pan3 acts as a positive regulator for PAN activity, recruiting the catalytic subunit pan2 to mRNA via its interaction with RNA and with pab1. This chain is PAN2-PAN3 deadenylation complex subunit PAN3, found in Aspergillus terreus (strain NIH 2624 / FGSC A1156).